The following is a 391-amino-acid chain: Response regulator aspartate phosphatase I (391 aa).

TPR repeat units follow at residues Leu62–Gly95, Ser150–Thr183, Val184–Ser217, Ala224–Ser257, Lys275–Leu311, and Glu338–Ile371.

Belongs to the Rap family.

It localises to the cytoplasm. Inhibited by PhrI. Functionally, activates ICEBs1 gene expression, excision and transfer by inactivating the ICEBs1 repressor protein ImmR. RapI-mediated induction likely results from an increase in the specific activity of the protease ImmA, which mediates proteolysis of ImmR. In addition, is involved in regulation of sporulation. Acts as a phosphatase that specifically dephosphorylates the sporulation initiation phosphotransferase Spo0F and inhibits its activity. The chain is Response regulator aspartate phosphatase I (rapI) from Bacillus subtilis (strain 168).